The sequence spans 404 residues: S-adenosylmethionine synthase (404 aa).

139 to 144 (GKGSSD) provides a ligand contact to ATP.

The protein belongs to the AdoMet synthase 2 family. Mg(2+) serves as cofactor.

It catalyses the reaction L-methionine + ATP + H2O = S-adenosyl-L-methionine + phosphate + diphosphate. Its pathway is amino-acid biosynthesis; S-adenosyl-L-methionine biosynthesis; S-adenosyl-L-methionine from L-methionine: step 1/1. In terms of biological role, catalyzes the formation of S-adenosylmethionine from methionine and ATP. The protein is S-adenosylmethionine synthase of Saccharolobus solfataricus (strain ATCC 35092 / DSM 1617 / JCM 11322 / P2) (Sulfolobus solfataricus).